A 304-amino-acid polypeptide reads, in one-letter code: Acetyl-coenzyme A carboxylase carboxyl transferase subunit beta (304 aa).

Positions 23 to 292 (VWTKCDSCGQ…PNPDAPREGV (270 aa)) constitute a CoA carboxyltransferase N-terminal domain. Residues Cys27, Cys30, Cys46, and Cys49 each coordinate Zn(2+). The C4-type zinc-finger motif lies at 27-49 (CDSCGQVLYRAELERNLEVCPKC). The disordered stretch occupies residues 284-304 (NPDAPREGVVVPPAPGQESEA).

It belongs to the AccD/PCCB family. As to quaternary structure, acetyl-CoA carboxylase is a heterohexamer composed of biotin carboxyl carrier protein (AccB), biotin carboxylase (AccC) and two subunits each of ACCase subunit alpha (AccA) and ACCase subunit beta (AccD). Zn(2+) is required as a cofactor.

The protein resides in the cytoplasm. The enzyme catalyses N(6)-carboxybiotinyl-L-lysyl-[protein] + acetyl-CoA = N(6)-biotinyl-L-lysyl-[protein] + malonyl-CoA. The protein operates within lipid metabolism; malonyl-CoA biosynthesis; malonyl-CoA from acetyl-CoA: step 1/1. Component of the acetyl coenzyme A carboxylase (ACC) complex. Biotin carboxylase (BC) catalyzes the carboxylation of biotin on its carrier protein (BCCP) and then the CO(2) group is transferred by the transcarboxylase to acetyl-CoA to form malonyl-CoA. The protein is Acetyl-coenzyme A carboxylase carboxyl transferase subunit beta of Salmonella arizonae (strain ATCC BAA-731 / CDC346-86 / RSK2980).